Consider the following 1328-residue polypeptide: 5'-3' exoribonuclease 1 (1328 aa).

Residues 1211 to 1328 (AGKNRKTNVS…VQPMGKLQIN (118 aa)) are disordered. Polar residues predominate over residues 1217 to 1231 (TNVSANNVSQGTDSR). Residues 1275 to 1286 (HKSKSKFSKGNH) are compositionally biased toward basic residues.

This sequence belongs to the 5'-3' exonuclease family. In terms of assembly, monomer. It depends on Mg(2+) as a cofactor.

It is found in the cytoplasm. It localises to the perinuclear region. The protein localises to the P-body. With respect to regulation, strand exchange activity is enhanced by fatty acid synthase (stimulatory factor P190/210). Multifunctional protein that exhibits several independent functions at different levels of the cellular processes. 5'-3' exonuclease component of the nonsense-mediated mRNA decay (NMD) which is a highly conserved mRNA degradation pathway, an RNA surveillance system whose role is to identify and rid cells of mRNA with premature termination codons and thus prevents accumulation of potentially harmful truncated proteins. Involved in the degradation of several hypomodified mature tRNA species and participates in the 5'-processing or the degradation of the snoRNA precursors and rRNA processing. The polypeptide is 5'-3' exoribonuclease 1 (exo2) (Schizosaccharomyces pombe (strain 972 / ATCC 24843) (Fission yeast)).